The primary structure comprises 407 residues: MRNVVRKPLTIGLALTLLLPMGMTATSAKNADSYAKKPHISALNAPQLDQRYKNEFTIGAAVEPYQLQNEKDVQMLKRHFNSIVAENVMKPISIQPEEGKFNFEQADRIVKFAKANGMDIRFHTLVWHSQVPQWFFLDKEGKPMVNETDPVKREQNKQLLLKRLETHIKTIVERYKDDIKYWDVVNEVVGDDGKLRNSPWYQIAGIDYIKVAFQAARKYGGDNIKLYMNDYNTEVEPKRTALYNLVKQLKEEGVPIDGIGHQSHIQIGWPSEAEIEKTINMFAALGLDNQITELDVSMYGWPPRAYPTYDAIPKQKFLDQAARYDRLFKLYEKLSDKISNVTFWGIADNHTWLDSRADVYYDANGNVVVDPNAPYAKVEKGKGKDAPFVFGPDYKVKPAYWAIIDHK.

The N-terminal stretch at 1 to 28 (MRNVVRKPLTIGLALTLLLPMGMTATSA) is a signal peptide. Residues 42–406 (ALNAPQLDQR…KPAYWAIIDH (365 aa)) form the GH10 domain. Residue E187 is the Proton donor of the active site. Residue E293 is the Nucleophile of the active site.

Belongs to the glycosyl hydrolase 10 (cellulase F) family.

The protein resides in the secreted. The catalysed reaction is Endohydrolysis of (1-&gt;4)-beta-D-xylosidic linkages in xylans.. Its pathway is glycan degradation; xylan degradation. In Geobacillus stearothermophilus (Bacillus stearothermophilus), this protein is Endo-1,4-beta-xylanase.